The primary structure comprises 326 residues: Malate dehydrogenase (326 aa).

11–17 (GAAGQIG) contributes to the NAD(+) binding site. Substrate is bound by residues arginine 92 and arginine 98. NAD(+) contacts are provided by residues asparagine 105, glutamine 112, and 129–131 (VGN). Substrate-binding residues include asparagine 131 and arginine 162. The Proton acceptor role is filled by histidine 187.

It belongs to the LDH/MDH superfamily. MDH type 2 family.

The catalysed reaction is (S)-malate + NAD(+) = oxaloacetate + NADH + H(+). Its function is as follows. Catalyzes the reversible oxidation of malate to oxaloacetate. This is Malate dehydrogenase from Halorhodospira halophila (strain DSM 244 / SL1) (Ectothiorhodospira halophila (strain DSM 244 / SL1)).